Here is a 498-residue protein sequence, read N- to C-terminus: Glycerol kinase (498 aa).

ADP is bound at residue T12. T12, T13, and S14 together coordinate ATP. T12 provides a ligand contact to sn-glycerol 3-phosphate. R16 lines the ADP pocket. Sn-glycerol 3-phosphate contacts are provided by R82, E83, Y134, and D243. 5 residues coordinate glycerol: R82, E83, Y134, D243, and Q244. ADP-binding residues include T265 and G308. Residues T265, G308, Q312, and G409 each contribute to the ATP site. ADP-binding residues include G409 and N413.

The protein belongs to the FGGY kinase family. As to quaternary structure, homotetramer and homodimer (in equilibrium).

The catalysed reaction is glycerol + ATP = sn-glycerol 3-phosphate + ADP + H(+). It participates in polyol metabolism; glycerol degradation via glycerol kinase pathway; sn-glycerol 3-phosphate from glycerol: step 1/1. Its activity is regulated as follows. Activated by phosphorylation and inhibited by fructose 1,6-bisphosphate (FBP). Functionally, key enzyme in the regulation of glycerol uptake and metabolism. Catalyzes the phosphorylation of glycerol to yield sn-glycerol 3-phosphate. The polypeptide is Glycerol kinase (Agathobacter rectalis (strain ATCC 33656 / DSM 3377 / JCM 17463 / KCTC 5835 / VPI 0990) (Eubacterium rectale)).